A 134-amino-acid polypeptide reads, in one-letter code: Large ribosomal subunit protein uL16c (134 aa).

Belongs to the universal ribosomal protein uL16 family. As to quaternary structure, part of the 50S ribosomal subunit.

The protein localises to the plastid. It is found in the chloroplast. In Oltmannsiellopsis viridis (Marine flagellate), this protein is Large ribosomal subunit protein uL16c.